Consider the following 360-residue polypeptide: Cinnamyl alcohol dehydrogenase 2 (360 aa).

Residues 23–351 (GVLSPFNFSR…KADVKYRFVI (329 aa)) enclose the Enoyl reductase (ER) domain. C50 is a binding site for Zn(2+). Residue S52 participates in an alcohol binding. S52 is an NADP(+) binding site. Residues D53, H72, E73, C103, C106, C109, C117, and C166 each contribute to the Zn(2+) site. H72 provides a ligand contact to an alcohol. NADP(+)-binding residues include L192, G194, L195, S214, T215, S216, K219, K220, V277, A279, S301, and R348.

The protein belongs to the zinc-containing alcohol dehydrogenase family. Class-P subfamily. Homodimer. Zn(2+) serves as cofactor. In terms of tissue distribution, mainly expressed in young roots and, to a lower extent, in stems and leaves.

Its subcellular location is the cytoplasm. The catalysed reaction is (E)-cinnamyl alcohol + NADP(+) = (E)-cinnamaldehyde + NADPH + H(+). Alcohol dehydrogenase that catalyzes the conversion of (E)-cinnamyl alcohol to (E)-cinnamaldehyde. This is Cinnamyl alcohol dehydrogenase 2 from Rauvolfia serpentina (Serpentine wood).